The following is a 63-amino-acid chain: uncharacterized protein (63 aa).

Positions 1–21 (MYLSLLLILLAWTLWLGNSLA) are cleaved as a signal peptide.

This is an uncharacterized protein from Haemophilus influenzae (strain ATCC 51907 / DSM 11121 / KW20 / Rd).